The primary structure comprises 395 residues: Elongation factor Tu (395 aa).

The 195-residue stretch at 10–204 folds into the tr-type G domain; it reads KSHVNIGTIG…AVDEYIPTPE (195 aa). The interval 19–26 is G1; the sequence is GHVDHGKT. Residue 19–26 coordinates GTP; the sequence is GHVDHGKT. A Mg(2+)-binding site is contributed by Thr26. The G2 stretch occupies residues 60–64; the sequence is GITIN. Residues 81 to 84 form a G3 region; that stretch reads DCPG. GTP-binding positions include 81–85 and 136–139; these read DCPGH and NKMD. The tract at residues 136–139 is G4; it reads NKMD. The segment at 174-176 is G5; that stretch reads SAL.

Belongs to the TRAFAC class translation factor GTPase superfamily. Classic translation factor GTPase family. EF-Tu/EF-1A subfamily. Monomer.

The protein resides in the cytoplasm. It catalyses the reaction GTP + H2O = GDP + phosphate + H(+). In terms of biological role, GTP hydrolase that promotes the GTP-dependent binding of aminoacyl-tRNA to the A-site of ribosomes during protein biosynthesis. The chain is Elongation factor Tu from Enterococcus faecalis (strain ATCC 700802 / V583).